An 85-amino-acid chain; its full sequence is Large ribosomal subunit protein bL27 (85 aa).

Residues 1–21 are disordered; that stretch reads MAHKKAGGSTRNGRDSNAQRL. A compositionally biased stretch (polar residues) spans 9-19; that stretch reads STRNGRDSNAQ.

The protein belongs to the bacterial ribosomal protein bL27 family.

This Pectobacterium atrosepticum (strain SCRI 1043 / ATCC BAA-672) (Erwinia carotovora subsp. atroseptica) protein is Large ribosomal subunit protein bL27.